The following is a 282-amino-acid chain: NH(3)-dependent NAD(+) synthetase (282 aa).

51-58 (GISGGVDS) is a binding site for ATP. Residue Asp57 participates in Mg(2+) binding. Residue Arg148 coordinates deamido-NAD(+). Position 168 (Thr168) interacts with ATP. Residue Glu173 participates in Mg(2+) binding. Positions 181 and 188 each coordinate deamido-NAD(+). Positions 197 and 219 each coordinate ATP. Position 268–269 (268–269 (HK)) interacts with deamido-NAD(+).

The protein belongs to the NAD synthetase family. As to quaternary structure, homodimer.

The catalysed reaction is deamido-NAD(+) + NH4(+) + ATP = AMP + diphosphate + NAD(+) + H(+). It participates in cofactor biosynthesis; NAD(+) biosynthesis; NAD(+) from deamido-NAD(+) (ammonia route): step 1/1. Catalyzes the ATP-dependent amidation of deamido-NAD to form NAD. Uses ammonia as a nitrogen source. The protein is NH(3)-dependent NAD(+) synthetase of Burkholderia cenocepacia (strain ATCC BAA-245 / DSM 16553 / LMG 16656 / NCTC 13227 / J2315 / CF5610) (Burkholderia cepacia (strain J2315)).